Consider the following 175-residue polypeptide: MFTSKPAFKIKNKASKSYRNTAVSKKLKEKRLAEHVRPSCFNIIRPLKKDIQIPVPSSRFLNKIQIHRIASGSQNTQFRQFNKTSIKSSKKYLNSFMAFRAYYSQFGSGVKQNVLSSLLAEEWHADKMQHGIWDYFAQQYNFINPGFGFVEWLTNNYAEVRGDGYWEDVFVHLAL.

The alpha box DNA-binding region spans Ser88–Asn144.

This sequence belongs to the MATALPHA1 family. In terms of assembly, binds DNA with a high specificity in complex with an MCM1 dimer. Interacts with STE12.

The protein localises to the nucleus. Mating type proteins are sequence specific DNA-binding proteins that act as master switches in yeast differentiation by controlling gene expression in a cell type-specific fashion. Transcriptional coactivator that, in alpha-cells, binds cooperatively with MCM1 and STE12 to a DNA sequence termed the QP' element, to activate the transcription of alpha-specific genes. The sequence is that of Mating-type protein ALPHA1 (MATALPHA1) from Saccharomyces cerevisiae (strain ATCC 204508 / S288c) (Baker's yeast).